The primary structure comprises 657 residues: Endoplasmic reticulum mannosyl-oligosaccharide 1,2-alpha-mannosidase (657 aa).

The Cytoplasmic segment spans residues 1-49; sequence MYPPPPAPAPHRDFISVTLSLGESYDNSKSRRRRSCWRKWKQLSRLQRN. The helical transmembrane segment at 50–70 threads the bilayer; that stretch reads VILFVLGFLILCGFLYSLQVS. Residues 71–657 lie on the Lumenal side of the membrane; it reads DQWKALSGSR…AHPLPIWSPA (587 aa). At serine 101 the chain carries Phosphoserine. Residues 118-157 form a disordered region; it reads HLRRGPPHLQIRPPNTVSKDGMQDDAKEREAALGKAQQEE. Residues 138–157 show a composition bias toward basic and acidic residues; the sequence is GMQDDAKEREAALGKAQQEE. The active-site Proton donor is glutamate 288. Aspartate 421 is a catalytic residue. Cysteine 485 and cysteine 514 form a disulfide bridge. Glutamate 528 functions as the Proton donor in the catalytic mechanism. Glutamate 557 is an active-site residue. Threonine 646 is a Ca(2+) binding site.

It belongs to the glycosyl hydrolase 47 family. Requires Ca(2+) as cofactor.

The protein resides in the endoplasmic reticulum membrane. It carries out the reaction N(4)-(alpha-D-Man-(1-&gt;2)-alpha-D-Man-(1-&gt;2)-alpha-D-Man-(1-&gt;3)-[alpha-D-Man-(1-&gt;2)-alpha-D-Man-(1-&gt;3)-[alpha-D-Man-(1-&gt;2)-alpha-D-Man-(1-&gt;6)]-alpha-D-Man-(1-&gt;6)]-beta-D-Man-(1-&gt;4)-beta-D-GlcNAc-(1-&gt;4)-beta-D-GlcNAc)-L-asparaginyl-[protein] (N-glucan mannose isomer 9A1,2,3B1,2,3) + 4 H2O = N(4)-(alpha-D-Man-(1-&gt;3)-[alpha-D-Man-(1-&gt;3)-[alpha-D-Man-(1-&gt;6)]-alpha-D-Man-(1-&gt;6)]-beta-D-Man-(1-&gt;4)-beta-D-GlcNAc-(1-&gt;4)-beta-D-GlcNAc)-L-asparaginyl-[protein] (N-glucan mannose isomer 5A1,2) + 4 beta-D-mannose. The enzyme catalyses N(4)-(alpha-D-Man-(1-&gt;2)-alpha-D-Man-(1-&gt;2)-alpha-D-Man-(1-&gt;3)-[alpha-D-Man-(1-&gt;3)-[alpha-D-Man-(1-&gt;2)-alpha-D-Man-(1-&gt;6)]-alpha-D-Man-(1-&gt;6)]-beta-D-Man-(1-&gt;4)-beta-D-GlcNAc-(1-&gt;4)-beta-D-GlcNAc)-L-asparaginyl-[protein] (N-glucan mannose isomer 8A1,2,3B1,3) + 3 H2O = N(4)-(alpha-D-Man-(1-&gt;3)-[alpha-D-Man-(1-&gt;3)-[alpha-D-Man-(1-&gt;6)]-alpha-D-Man-(1-&gt;6)]-beta-D-Man-(1-&gt;4)-beta-D-GlcNAc-(1-&gt;4)-beta-D-GlcNAc)-L-asparaginyl-[protein] (N-glucan mannose isomer 5A1,2) + 3 beta-D-mannose. It functions in the pathway protein modification; protein glycosylation. Functionally, involved in glycoprotein quality control targeting of misfolded glycoproteins for degradation. It primarily trims a single alpha-1,2-linked mannose residue from Man(9)GlcNAc(2) to produce Man(8)GlcNAc(2), but at high enzyme concentrations, as found in the ER quality control compartment (ERQC), it further trims the carbohydrates to Man(5-6)GlcNAc(2). The sequence is that of Endoplasmic reticulum mannosyl-oligosaccharide 1,2-alpha-mannosidase (Man1b1) from Rattus norvegicus (Rat).